Consider the following 158-residue polypeptide: 2-C-methyl-D-erythritol 2,4-cyclodiphosphate synthase (158 aa).

A divalent metal cation contacts are provided by aspartate 9 and histidine 11. 4-CDP-2-C-methyl-D-erythritol 2-phosphate is bound by residues 9 to 11 and 35 to 36; these read DVH and HS. Histidine 43 is an a divalent metal cation binding site. 4-CDP-2-C-methyl-D-erythritol 2-phosphate is bound by residues 57-59, 62-66, 101-107, 133-136, phenylalanine 140, and arginine 143; these read DIG, FPDTD, AQKPKMA, and TTTE.

This sequence belongs to the IspF family. Homotrimer. Requires a divalent metal cation as cofactor.

The enzyme catalyses 4-CDP-2-C-methyl-D-erythritol 2-phosphate = 2-C-methyl-D-erythritol 2,4-cyclic diphosphate + CMP. The protein operates within isoprenoid biosynthesis; isopentenyl diphosphate biosynthesis via DXP pathway; isopentenyl diphosphate from 1-deoxy-D-xylulose 5-phosphate: step 4/6. Functionally, involved in the biosynthesis of isopentenyl diphosphate (IPP) and dimethylallyl diphosphate (DMAPP), two major building blocks of isoprenoid compounds. Catalyzes the conversion of 4-diphosphocytidyl-2-C-methyl-D-erythritol 2-phosphate (CDP-ME2P) to 2-C-methyl-D-erythritol 2,4-cyclodiphosphate (ME-CPP) with a corresponding release of cytidine 5-monophosphate (CMP). The protein is 2-C-methyl-D-erythritol 2,4-cyclodiphosphate synthase of Bacillus pumilus (strain SAFR-032).